The chain runs to 251 residues: Probable caffeoyl-CoA O-methyltransferase 3 (251 aa).

Residues Thr61, Asp83, 85–86 (GV), Ser91, Asp109, and Ala138 each bind S-adenosyl-L-methionine. Asp160 provides a ligand contact to a divalent metal cation. S-adenosyl-L-methionine is bound at residue Asp162. A divalent metal cation contacts are provided by Asp186 and Asn187.

The protein belongs to the class I-like SAM-binding methyltransferase superfamily. Cation-dependent O-methyltransferase family. CCoAMT subfamily.

It catalyses the reaction (E)-caffeoyl-CoA + S-adenosyl-L-methionine = (E)-feruloyl-CoA + S-adenosyl-L-homocysteine + H(+). This chain is Probable caffeoyl-CoA O-methyltransferase 3 (omt1), found in Dictyostelium discoideum (Social amoeba).